A 787-amino-acid chain; its full sequence is MLNSVKKLLGDSQKRKIKNYEQIVNDINQLESVMETLSDDELRQKTVAFQHMLQNGKTVEDIKVEAFAVVREAAKRVLGLRHYDVQLIGGLVLLEGNIAEMPTGEGKTLVSSLPTYVRALEKKGVHVITVNDYLAKRDKELIGRVHEFLGLTVGLNMSQMESIDKKRAYEADITYGIGTEFGFDYLRDNMASSKAEQVQRPFHFAIIDEIDSVLIDEAKTPLIIAGKKSSSSDFHHLCAKVMKTFQDTLHYTYDAETKACNFTEDGITKIEDLFDIDNLYDLEHQTLYHYMIQALRAHVAFQLDVDYIIEDEKIMLVDIFTGRIMDGRSLSDGLHQALEAKEGLPITDENQTQASITIQNFFRMYPALSGMTGTAKTEEKEFNRVYNMEVISIPTNRPILREDKKDVVYITADAKYKAVCAEVMNIHKKERPILIGTMSILQSETVARYLDEANLPYQLLNAKSAEQEADLIALAGKKGKITIATNMAGRGTDILLEKGVHELGGLHVIGTERHESRRVDNQLKGRAGRQGDPGSSQFFLSLEDEMIQRYAGEDVEKLKKSLKIDENGLILNNKIYDLINRTQLICEGSHFSMREYNLKLDDVINDQRNVVYKLRNNLLNEEVNMIEIVIPMIKNTLTVIAKDHLLEGMLPEEWDFTRLVEDLKAVLSTEEIPALSANNVHSAEDLQELLKDTLTSYIERVNALESDADAQQVLRQISLHFLDSGWTSHLSAMQHLKEGIGLRQYQQEDPARLYQKEGFEIFLHTFSHFEKEVALYLARYITVPQNI.

Residues Gln86, 104–108 (GEGKT), and Asp493 contribute to the ATP site.

This sequence belongs to the SecA family. In terms of assembly, monomer and homodimer. Part of the essential Sec protein translocation apparatus which comprises SecA, SecYEG and auxiliary proteins SecDF. Other proteins may also be involved.

Its subcellular location is the cell membrane. The protein localises to the cytoplasm. The catalysed reaction is ATP + H2O + cellular proteinSide 1 = ADP + phosphate + cellular proteinSide 2.. Functionally, part of the Sec protein translocase complex. Interacts with the SecYEG preprotein conducting channel. Has a central role in coupling the hydrolysis of ATP to the transfer of proteins into and across the cell membrane, serving as an ATP-driven molecular motor driving the stepwise translocation of polypeptide chains across the membrane. This chain is Protein translocase subunit SecA 2, found in Bacillus thuringiensis subsp. konkukian (strain 97-27).